The sequence spans 293 residues: Formamidopyrimidine-DNA glycosylase (293 aa).

Residue Pro2 is the Schiff-base intermediate with DNA of the active site. The Proton donor role is filled by Glu3. Lys58 serves as the catalytic Proton donor; for beta-elimination activity. The DNA site is built by His104, Arg123, and Lys166. Residues 257-293 form an FPG-type zinc finger; that stretch reads QVYDREGEPCRTDGCEGVVKRFVQNGRSTFWCPKCQR. Arg283 serves as the catalytic Proton donor; for delta-elimination activity.

Belongs to the FPG family. As to quaternary structure, monomer. Requires Zn(2+) as cofactor.

The catalysed reaction is Hydrolysis of DNA containing ring-opened 7-methylguanine residues, releasing 2,6-diamino-4-hydroxy-5-(N-methyl)formamidopyrimidine.. It carries out the reaction 2'-deoxyribonucleotide-(2'-deoxyribose 5'-phosphate)-2'-deoxyribonucleotide-DNA = a 3'-end 2'-deoxyribonucleotide-(2,3-dehydro-2,3-deoxyribose 5'-phosphate)-DNA + a 5'-end 5'-phospho-2'-deoxyribonucleoside-DNA + H(+). Functionally, involved in base excision repair of DNA damaged by oxidation or by mutagenic agents. Acts as a DNA glycosylase that recognizes and removes damaged bases. Has a preference for oxidized purines, such as 7,8-dihydro-8-oxoguanine (8-oxoG). Has AP (apurinic/apyrimidinic) lyase activity and introduces nicks in the DNA strand. Cleaves the DNA backbone by beta-delta elimination to generate a single-strand break at the site of the removed base with both 3'- and 5'-phosphates. In Bradyrhizobium sp. (strain ORS 278), this protein is Formamidopyrimidine-DNA glycosylase.